The sequence spans 293 residues: Bifunctional protein FolD (293 aa).

Residues 165-167, T192, and V233 each bind NADP(+); that span reads GRG.

This sequence belongs to the tetrahydrofolate dehydrogenase/cyclohydrolase family. Homodimer.

It catalyses the reaction (6R)-5,10-methylene-5,6,7,8-tetrahydrofolate + NADP(+) = (6R)-5,10-methenyltetrahydrofolate + NADPH. The catalysed reaction is (6R)-5,10-methenyltetrahydrofolate + H2O = (6R)-10-formyltetrahydrofolate + H(+). The protein operates within one-carbon metabolism; tetrahydrofolate interconversion. Functionally, catalyzes the oxidation of 5,10-methylenetetrahydrofolate to 5,10-methenyltetrahydrofolate and then the hydrolysis of 5,10-methenyltetrahydrofolate to 10-formyltetrahydrofolate. In Streptomyces griseus subsp. griseus (strain JCM 4626 / CBS 651.72 / NBRC 13350 / KCC S-0626 / ISP 5235), this protein is Bifunctional protein FolD.